The primary structure comprises 451 residues: Protein-tyrosine kinase 6 (451 aa).

Residues 8–72 enclose the SH3 domain; sequence HLGPKYVGLW…PHNYLAEKET (65 aa). Phosphotyrosine occurs at positions 13, 61, 66, and 114. Residues 78 to 170 enclose the SH2 domain; sequence WFFGCISRSE…SHGLQLSMPC (93 aa). The linker stretch occupies residues 171–190; it reads WKHKTEPLPHWDDWERPREE. The Protein kinase domain occupies 191–445; sequence FTLCKKLGAG…DLCEKLTGIT (255 aa). ATP is bound by residues 197 to 205 and Lys-219; that span reads LGAGYFGEV. Residue Asp-312 is the Proton acceptor of the active site. At Tyr-342 the chain carries Phosphotyrosine; by autocatalysis. A phosphotyrosine mark is found at Tyr-351 and Tyr-447.

The protein belongs to the protein kinase superfamily. Tyr protein kinase family. BRK/PTK6/SIK subfamily. Interacts with KHDRBS1. Interacts with phosphorylated IRS4. Interacts with GAP-A.p65. Interacts with ADAM15. Interacts (via SH3 and SH2 domains) with phosphorylated IRS4. Interacts (via SH3 domain) with SFPQ. Interacts with EGFR and ERBB2. Interacts with STAP2. Interacts with PNX. Interacts with SFPQ. Interacts with PTK/ATK. Interacts with CTNNB1. In terms of processing, autophosphorylated. Autophosphorylation of Tyr-342 leads to an increase of kinase activity. Tyr-447 binds to the SH2 domain when phosphorylated and negatively regulates kinase activity. Expressed only in epithelial tissues, including the skin and lining of the alimentary canal. Restricted to the cell layers immediately above the proliferative cell zone in these epithelia.

It is found in the cytoplasm. Its subcellular location is the nucleus. It localises to the membrane. The protein resides in the cell projection. The protein localises to the ruffle. The catalysed reaction is L-tyrosyl-[protein] + ATP = O-phospho-L-tyrosyl-[protein] + ADP + H(+). Activated by EGF, NRG1 and IGF1. Inhibited by SOCS3 to phosphorylate STAT3. Stabilized in the inactive form by an association between the SH3 domain and the SH2-TK linker region. Interaction between Trp-184 within SH2-TK linker region and the catalytic domain appears essential for positive regulation of kinase activity. Its function is as follows. Non-receptor tyrosine-protein kinase implicated in the regulation of a variety of signaling pathways that control the differentiation and maintenance of normal epithelia, as well as tumor growth. Function seems to be context dependent and differ depending on cell type, as well as its intracellular localization. A number of potential nuclear and cytoplasmic substrates have been identified. These include the RNA-binding proteins: KHDRBS1/SAM68, KHDRBS2/SLM1, KHDRBS3/SLM2 and SFPQ/PSF; transcription factors: STAT3 and STAT5A/B and a variety of signaling molecules: ARHGAP35/p190RhoGAP, PXN/paxillin, BTK/ATK, STAP2/BKS. Phosphorylates the GTPase-activating protein ARAP1 following EGF stimulation which enhances EGFR signaling by delaying EGFR down-regulation. Also associates with a variety of proteins that are likely upstream of PTK6 in various signaling pathways, or for which PTK6 may play an adapter-like role. These proteins include ADAM15, EGFR, ERBB2, ERBB3 and IRS4. In normal or non-tumorigenic tissues, PTK6 promotes cellular differentiation and apoptosis. In tumors PTK6 contributes to cancer progression by sensitizing cells to mitogenic signals and enhancing proliferation, anchorage-independent survival and migration/invasion. Association with EGFR, ERBB2, ERBB3 may contribute to mammary tumor development and growth through enhancement of EGF-induced signaling via BTK/AKT and PI3 kinase. Contributes to migration and proliferation by contributing to EGF-mediated phosphorylation of ARHGAP35/p190RhoGAP, which promotes association with RASA1/p120RasGAP, inactivating RhoA while activating RAS. EGF stimulation resulted in phosphorylation of PNX/Paxillin by PTK6 and activation of RAC1 via CRK/CrKII, thereby promoting migration and invasion. PTK6 activates STAT3 and STAT5B to promote proliferation. Nuclear PTK6 may be important for regulating growth in normal epithelia, while cytoplasmic PTK6 might activate oncogenic signaling pathways. This Mus musculus (Mouse) protein is Protein-tyrosine kinase 6 (Ptk6).